The sequence spans 420 residues: RING finger protein 39 (420 aa).

The segment at Cys-88–Gly-135 adopts an RING-type zinc-finger fold. Residues Asp-210 to Ser-420 enclose the B30.2/SPRY domain. The disordered stretch occupies residues Asp-246–Lys-265.

The protein resides in the cytoplasm. It carries out the reaction S-ubiquitinyl-[E2 ubiquitin-conjugating enzyme]-L-cysteine + [acceptor protein]-L-lysine = [E2 ubiquitin-conjugating enzyme]-L-cysteine + N(6)-ubiquitinyl-[acceptor protein]-L-lysine.. Its pathway is protein modification; protein ubiquitination. In terms of biological role, plays an inhibitory role in anti-RNA viral innate immunity by targeting the adapter DDX3X and promoting its 'Lys-48'-linked polyubiquitination. Alternatively, enhances the cGAS-STING pathway activation by promoting 'Lys-63'-linked ubiquitination of STING1, facilitating the STING1-TBK1 complex formation and STING1 activation. The chain is RING finger protein 39 (RNF39) from Pan troglodytes (Chimpanzee).